A 399-amino-acid chain; its full sequence is tRNA-specific 2-thiouridylase MnmA (399 aa).

ATP is bound by residues 18-25 (AMSGGVDS) and Leu-44. Cys-112 acts as the Nucleophile in catalysis. A disulfide bond links Cys-112 and Cys-213. Gly-136 contributes to the ATP binding site. The interaction with tRNA stretch occupies residues 163–165 (RDQ). The active-site Cysteine persulfide intermediate is the Cys-213.

It belongs to the MnmA/TRMU family.

Its subcellular location is the cytoplasm. It carries out the reaction S-sulfanyl-L-cysteinyl-[protein] + uridine(34) in tRNA + AH2 + ATP = 2-thiouridine(34) in tRNA + L-cysteinyl-[protein] + A + AMP + diphosphate + H(+). In terms of biological role, catalyzes the 2-thiolation of uridine at the wobble position (U34) of tRNA, leading to the formation of s(2)U34. The sequence is that of tRNA-specific 2-thiouridylase MnmA from Rhizobium leguminosarum bv. trifolii (strain WSM2304).